The following is a 456-amino-acid chain: Outer membrane efflux protein BepC (456 aa).

An N-terminal signal peptide occupies residues M1–A28. A coiled-coil region spans residues R312 to A341.

It belongs to the outer membrane factor (OMF) (TC 1.B.17) family. Probably part of a tripartite efflux pump, which is composed of an outer membrane efflux protein, an inner membrane protein and a protein that expands the periplasmic space. Could form a tripartite pump with BepD and BepE or with BepF and BepG.

It is found in the cell outer membrane. In terms of biological role, involved in the efflux of toxic and relatively hydrophobic compounds. Influences survival inside the host. In Brucella suis biovar 1 (strain 1330), this protein is Outer membrane efflux protein BepC (bepC).